A 235-amino-acid polypeptide reads, in one-letter code: Lipoprotein-releasing system ATP-binding protein LolD (235 aa).

Residues 5-235 (FALANIYKSF…SIDESGFNKI (231 aa)) form the ABC transporter domain. 40–47 (GKSGSGKS) lines the ATP pocket.

The protein belongs to the ABC transporter superfamily. Lipoprotein translocase (TC 3.A.1.125) family. The complex is composed of two ATP-binding proteins (LolD) and two transmembrane proteins (LolC and LolE).

Its subcellular location is the cell inner membrane. Part of the ABC transporter complex LolCDE involved in the translocation of mature outer membrane-directed lipoproteins, from the inner membrane to the periplasmic chaperone, LolA. Responsible for the formation of the LolA-lipoprotein complex in an ATP-dependent manner. This chain is Lipoprotein-releasing system ATP-binding protein LolD, found in Ehrlichia chaffeensis (strain ATCC CRL-10679 / Arkansas).